A 555-amino-acid polypeptide reads, in one-letter code: Potassium-transporting ATPase potassium-binding subunit (555 aa).

10 helical membrane-spanning segments follow: residues 2–22 (IWVA…PTGI), 60–80 (QYAL…YFIF), 130–150 (IGIT…VMAF), 173–193 (VFLP…VPQT), 246–266 (MSNI…PFTY), 278–298 (ILFV…TTSE), 374–394 (AGFV…GLMV), 412–432 (LIAV…ALAL), 483–503 (LVMF…AASL), and 525–545 (GIFI…MLVL).

It belongs to the KdpA family. As to quaternary structure, the system is composed of three essential subunits: KdpA, KdpB and KdpC.

It is found in the cell membrane. Part of the high-affinity ATP-driven potassium transport (or Kdp) system, which catalyzes the hydrolysis of ATP coupled with the electrogenic transport of potassium into the cytoplasm. This subunit binds the extracellular potassium ions and delivers the ions to the membrane domain of KdpB through an intramembrane tunnel. This chain is Potassium-transporting ATPase potassium-binding subunit, found in Bacillus cereus (strain G9842).